Consider the following 774-residue polypeptide: Acetyl-CoA decarbonylase/synthase complex subunit alpha (774 aa).

The [4Fe-4S] cluster site is built by cysteine 73, cysteine 76, cysteine 77, cysteine 79, cysteine 84, and cysteine 94. Residue histidine 117 participates in CO binding. Histidine 251, cysteine 279, and cysteine 318 together coordinate [Ni-4Fe-4S] cluster. 4Fe-4S ferredoxin-type domains are found at residues 398–427 (LNEV…VKEA) and 436–466 (FKGF…VSMT). Cysteine 408, cysteine 411, cysteine 414, cysteine 418, cysteine 446, cysteine 449, cysteine 452, and cysteine 456 together coordinate [4Fe-4S] cluster. The [Ni-4Fe-4S] cluster site is built by cysteine 514, cysteine 543, and cysteine 578.

The protein belongs to the Ni-containing carbon monoxide dehydrogenase family. Heterotetramer of two alpha and two epsilon subunits. The ACDS complex is made up of alpha, epsilon, beta, gamma and delta subunits with a probable stoichiometry of (alpha(2)epsilon(2))(4)-beta(8)-(gamma(1)delta(1))(8). [4Fe-4S] cluster serves as cofactor. It depends on [Ni-4Fe-4S] cluster as a cofactor.

The enzyme catalyses CO + 2 oxidized [2Fe-2S]-[ferredoxin] + H2O = 2 reduced [2Fe-2S]-[ferredoxin] + CO2 + 2 H(+). Functionally, part of the ACDS complex that catalyzes the reversible cleavage of acetyl-CoA, allowing autotrophic growth from CO(2). The alpha-epsilon subcomponent functions as a carbon monoxide dehydrogenase. The sequence is that of Acetyl-CoA decarbonylase/synthase complex subunit alpha from Methanocaldococcus jannaschii (strain ATCC 43067 / DSM 2661 / JAL-1 / JCM 10045 / NBRC 100440) (Methanococcus jannaschii).